The primary structure comprises 455 residues: Bifunctional protein GlmU (455 aa).

The tract at residues 1–227 is pyrophosphorylase; sequence MGLSVIILAA…CEEVQGVNDR (227 aa). Residues 8–11, K22, Q73, 78–79, 100–102, G137, E152, N167, and N225 contribute to the UDP-N-acetyl-alpha-D-glucosamine site; these read LAAG, GT, and YGD. D102 is a binding site for Mg(2+). Residue N225 participates in Mg(2+) binding. Residues 228–248 are linker; that stretch reads WELTKLERYYQRLMAKKLSLA. The interval 249 to 455 is N-acetyltransferase; that stretch reads GVTIIDPERF…KGWHRPTKKE (207 aa). UDP-N-acetyl-alpha-D-glucosamine contacts are provided by R332 and K350. H362 serves as the catalytic Proton acceptor. Residues Y365 and N376 each coordinate UDP-N-acetyl-alpha-D-glucosamine. Acetyl-CoA contacts are provided by residues A379, 385–386, S404, A422, and R439; that span reads NY.

This sequence in the N-terminal section; belongs to the N-acetylglucosamine-1-phosphate uridyltransferase family. It in the C-terminal section; belongs to the transferase hexapeptide repeat family. Homotrimer. Requires Mg(2+) as cofactor.

The protein resides in the cytoplasm. The catalysed reaction is alpha-D-glucosamine 1-phosphate + acetyl-CoA = N-acetyl-alpha-D-glucosamine 1-phosphate + CoA + H(+). The enzyme catalyses N-acetyl-alpha-D-glucosamine 1-phosphate + UTP + H(+) = UDP-N-acetyl-alpha-D-glucosamine + diphosphate. It functions in the pathway nucleotide-sugar biosynthesis; UDP-N-acetyl-alpha-D-glucosamine biosynthesis; N-acetyl-alpha-D-glucosamine 1-phosphate from alpha-D-glucosamine 6-phosphate (route II): step 2/2. The protein operates within nucleotide-sugar biosynthesis; UDP-N-acetyl-alpha-D-glucosamine biosynthesis; UDP-N-acetyl-alpha-D-glucosamine from N-acetyl-alpha-D-glucosamine 1-phosphate: step 1/1. Its pathway is bacterial outer membrane biogenesis; LPS lipid A biosynthesis. Catalyzes the last two sequential reactions in the de novo biosynthetic pathway for UDP-N-acetylglucosamine (UDP-GlcNAc). The C-terminal domain catalyzes the transfer of acetyl group from acetyl coenzyme A to glucosamine-1-phosphate (GlcN-1-P) to produce N-acetylglucosamine-1-phosphate (GlcNAc-1-P), which is converted into UDP-GlcNAc by the transfer of uridine 5-monophosphate (from uridine 5-triphosphate), a reaction catalyzed by the N-terminal domain. The polypeptide is Bifunctional protein GlmU (Coxiella burnetii (strain CbuK_Q154) (Coxiella burnetii (strain Q154))).